Here is a 495-residue protein sequence, read N- to C-terminus: MFS transporter prlL (495 aa).

Residues 1–24 (MAQSFANEHDPAKRAEERGHVGTI) are disordered. Basic and acidic residues predominate over residues 7–20 (NEHDPAKRAEERGH). 11 consecutive transmembrane segments (helical) span residues 102-122 (IALM…NVLL), 130-150 (WIAI…GAHN), 159-179 (FLLG…LTFW), 189-209 (VAFI…IAYA), 224-244 (WLFI…LFFL), 292-312 (LWAH…LSLF), 329-349 (LMTV…SWSA), 356-376 (GLHS…SAVL), 386-406 (GCLI…LGWL), 418-438 (LAIA…GVWI), and 449-469 (PTGH…CVAL).

The protein belongs to the major facilitator superfamily.

It is found in the cell membrane. In terms of biological role, efflux pump that might be required for efficient secretion of pyrrolocin or other secondary metabolies produced by the pyrrolocin gene cluster. This chain is MFS transporter prlL, found in Fungal sp. (strain NRRL 50135).